The following is a 139-amino-acid chain: Peptide methionine sulfoxide reductase B4 (139 aa).

Residue alanine 2 is modified to N-acetylalanine. One can recognise a MsrB domain in the interval 12-133; that stretch reads EEEWRAVLSP…NSVSINFNPA (122 aa). Cysteine 51, cysteine 54, cysteine 97, and cysteine 100 together coordinate Zn(2+). Cysteine 69 and cysteine 122 form a disulfide bridge. The active-site Nucleophile is cysteine 122.

Belongs to the MsrB Met sulfoxide reductase family. It depends on Zn(2+) as a cofactor.

The protein localises to the cytoplasm. The protein resides in the cytosol. It catalyses the reaction L-methionyl-[protein] + [thioredoxin]-disulfide + H2O = L-methionyl-(R)-S-oxide-[protein] + [thioredoxin]-dithiol. Its function is as follows. Catalyzes the reduction of methionine sulfoxide (MetSO) to methionine in proteins. Plays a protective role against oxidative stress by restoring activity to proteins that have been inactivated by methionine oxidation. MSRB family specifically reduces the MetSO R-enantiomer. This chain is Peptide methionine sulfoxide reductase B4 (MSRB4), found in Arabidopsis thaliana (Mouse-ear cress).